The sequence spans 501 residues: MTEASEINLSDIKGPIDVNTPITNHRTALIQNYSTKPKLTYQTVFGVNGPLVIVHNVKFPMFNEIVKITLPNGQIRMGQVLESSKNKAVVQVFEGTTGVDAKFTTCEFTGDIFRSPVSLDMLGRIFNGSGKPIDKGPPVLPEDYLDINGQPINPFNRIYPEEMIQTGISAIDVMNSIARGQKIPIFSAAGLPHNEIAAQIVRQGGLVQLPGRNNETVNFAIVFAAMGVNMETARFFKQDFEECGSMDNVCLFLNLANDPTIERIITPRIALTAAEFFAYHCGKHVLVVLTDMSSYAEALREISAAREEVPGRRGFPGYMYTDLATIYERAGRVKGREGSITQIPILTMPNNDITHPIPDLTGYITEGQIYIDKQLHKRLIYPPIDVLPSLSRLMKSAVGEGMTREDHSDLSNQLYACYAMGKDVQAMKAVVGVEALSPDDLLYLEFLAKFEKNFIAQGRYENRTIVESLNIGWELLRIFPREMLKRIPETLLEKYYKRKKQ.

Residue R392 coordinates ATP.

Belongs to the ATPase alpha/beta chains family. In terms of assembly, V-ATPase is a heteromultimeric enzyme made up of two complexes: the ATP-hydrolytic V1 complex and the proton translocation V0 complex. The V1 complex consists of three catalytic AB heterodimers that form a heterohexamer, three peripheral stalks each consisting of EG heterodimers, one central rotor including subunits D and F, and the regulatory subunits C and H. The proton translocation complex V0 consists of the proton transport subunit a, a ring of proteolipid subunits c9c'', rotary subunit d, subunits e and f, and the accessory subunits vah-19/Ac45 and vah-20/PRR. As to expression, predominantly expressed in male and hermaphrodite testis (at protein level).

It is found in the cytoplasm. Non-catalytic subunit of the V1 complex of vacuolar(H+)-ATPase (V-ATPase), a multisubunit enzyme composed of a peripheral complex (V1) that hydrolyzes ATP and a membrane integral complex (V0) that translocates protons. V-ATPase is responsible for acidifying and maintaining the pH of intracellular compartments and in some cell types, is targeted to the plasma membrane, where it is responsible for acidifying the extracellular environment. In neurons, required for necrotic cell death probably by promoting intracellular acidification. Required for spermatogenesis where it regulates the fibrous body-membranous organelle (FBMO) morphology in spermatocytes and the acidification of FBMO-derived secretory membranous organelles (MOs) as spermatids mature. This chain is V-type proton ATPase subunit B 2, found in Caenorhabditis elegans.